A 176-amino-acid polypeptide reads, in one-letter code: Putative ribosomal protein eS10-like (176 aa).

Residues 104-176 (TLHRSRPETG…CGRGRGQPPQ (73 aa)) form a disordered region. Residues 108 to 139 (SRPETGRPRPKGLEGKRPARLTRREADRDTYR) are compositionally biased toward basic and acidic residues.

The protein belongs to the eukaryotic ribosomal protein eS10 family.

This chain is Putative ribosomal protein eS10-like (RPS10P5), found in Homo sapiens (Human).